Reading from the N-terminus, the 152-residue chain is Ribosome maturation factor RimP (152 aa).

It belongs to the RimP family.

It localises to the cytoplasm. In terms of biological role, required for maturation of 30S ribosomal subunits. In Desulfatibacillum aliphaticivorans, this protein is Ribosome maturation factor RimP.